The chain runs to 534 residues: Cytochrome P450 monooxygenase btcB (534 aa).

Residue Asn-20 is glycosylated (N-linked (GlcNAc...) asparagine). The chain crosses the membrane as a helical span at residues 41–61; it reads ALAFLCGALLFGFVYSVFYNL. Asn-335, Asn-413, and Asn-431 each carry an N-linked (GlcNAc...) asparagine glycan. A heme-binding site is contributed by Cys-484.

This sequence belongs to the cytochrome P450 family. Heme is required as a cofactor.

It localises to the membrane. It functions in the pathway secondary metabolite biosynthesis; terpenoid biosynthesis. In terms of biological role, cytochrome P4590 monooxygenase part of the gene cluster that mediates the biosynthesis of betaestacins. The bifunctional terpene synthase btcA converts isopentenyl diphosphate (IPP) and dimethylallyl diphosphate (DMAPP) into the sesterterpene betaestacin I. The C-terminal prenyltransferase (PT) domain of btcA catalyzes formation of GFPP, whereas the N-terminal terpene cyclase (TC) domain catalyzes the cyclization of GFPP into betaestacin I. The cytochrome P450 monooxygenase btcB oxidizes the C25 methyl group of betaestacin I to yield the carboxylic acid betaestacin IV via the alcohol betaestacin III. The cytochrome P450 monooxygenase btcC further catalyzes the multistep oxidation of betaestacin IV to produce several compounds, including betaestacins Va, Vb, Vc and VI. This Colletotrichum orbiculare (strain 104-T / ATCC 96160 / CBS 514.97 / LARS 414 / MAFF 240422) (Cucumber anthracnose fungus) protein is Cytochrome P450 monooxygenase btcB.